A 393-amino-acid chain; its full sequence is Alpha-pyrone synthesis polyketide synthase-like Pks18 (393 aa).

The interval 1 to 26 (MNVSAESGAPRRAGQRHEVGLAQLPP) is disordered. Cysteine 175 serves as the catalytic Nucleophile. Residue histidine 221 participates in substrate binding.

It belongs to the thiolase-like superfamily. Chalcone/stilbene synthases family. In terms of assembly, homodimer.

Its pathway is lipid metabolism; fatty acid biosynthesis. Involved in the biosynthesis of tri- and tetraketide alpha-pyrones. Pks18 catalyzes the extension of medium- and long-chain aliphatic acyl-CoA substrates by using malonyl-CoA as an extender molecule to synthesize polyketide products. The polypeptide is Alpha-pyrone synthesis polyketide synthase-like Pks18 (pks18) (Mycobacterium bovis (strain ATCC BAA-935 / AF2122/97)).